Here is a 925-residue protein sequence, read N- to C-terminus: MLSSMNWVLLSFIIVLGGGLLLSEGASSSRPPVIKVGAIFGLNTMYGETANIAFKAAEEDVNSDPSFLGGSKLRILMNDAKRSGFLSIMGALQFMETDVVAIIGPQTSIMAHVLSHLANELTVPMLSFTALDPTLSPLQFPFFVQTAPSDLFLMRAIAEMITYYGWSDVVALYNDDDNSRNGVTALGDELEERRCKISYKAVLPLDVVITSPVEIIEELIKIRGMESRVIVVNTFPNTGKMIFKEAERLGMMEKGYVWIATTWLSSVLDSNLPLDTKLVNGVLTLRLHTPDSRKKRDFAARWKNKLSNNKTIGLNVYGLYAYDTVWIIARAVKTLLEAGGNLSFSNDAKLGSLKGEALNLSALSRFDQGSQLLDYIVHTKMSGLTGPVQFHPDRSMLQPSYDIINLVDDRVHQIGYWSNYSGLSIVPPESFYSKPPNRSSSNQHLNSVTWPGGTSVTPRGWIFRNNGRRLRIGVPDRASFKDFVSRVNGSSNKVQGYCIDVFEAAVKLLSYPVPHEFIFFGDGLTNPNYNELVNKVTTGVDFDAVVGDIAIVTKRTRIVDFTQPYIESGLVVVAPVTRLNENPWAFLRPFTLPMWAVTASFFVIVGAAIWILEHRINDEFRGPPRRQIITILWFTFSTMFFSHRETTVSTLGRMVLLIWLFVVLIITSSYTASLTSILTVQQLNSPIKGVDTLISSTGRIGFQVGSFAENYMTDELNIASSRLVPLASPEEYANALQNGTVAAIVDERPYIDLFLSDYCKFAIRGQEFTRCGWGFAFPRDSPLAVDMSTAILGLSETGELQKIHDRWLSKSNCSSPHGSQSGDSEQLNVHSFWGMFLVVGIACLVALFIHFFKIIRDFCKDTPEVVVEEAIPSPKSSRLTKLQTFLAFVDEKEEETKRRLKRKRNNDHSMNANSIISRTASRRPI.

A signal peptide spans 1 to 25; it reads MLSSMNWVLLSFIIVLGGGLLLSEG. The Extracellular portion of the chain corresponds to 26–591; it reads ASSSRPPVIK…NPWAFLRPFT (566 aa). 6 N-linked (GlcNAc...) asparagine glycosylation sites follow: N309, N341, N359, N419, N437, and N488. Residues 592-612 form a helical membrane-spanning segment; it reads LPMWAVTASFFVIVGAAIWIL. At 613–621 the chain is on the cytoplasmic side; sequence EHRINDEFR. The helical transmembrane segment at 622 to 642 threads the bilayer; the sequence is GPPRRQIITILWFTFSTMFFS. The Cytoplasmic portion of the chain corresponds to 643–653; the sequence is HRETTVSTLGR. Residues 654-674 traverse the membrane as a helical segment; sequence MVLLIWLFVVLIITSSYTASL. At 675-831 the chain is on the extracellular side; that stretch reads TSILTVQQLN…GDSEQLNVHS (157 aa). N-linked (GlcNAc...) asparagine glycans are attached at residues N738 and N812. A helical membrane pass occupies residues 832 to 852; that stretch reads FWGMFLVVGIACLVALFIHFF. Over 853–925 the chain is Cytoplasmic; the sequence is KIIRDFCKDT…ISRTASRRPI (73 aa). The interval 897-925 is disordered; sequence KRRLKRKRNNDHSMNANSIISRTASRRPI. Over residues 908-919 the composition is skewed to polar residues; that stretch reads HSMNANSIISRT.

The protein belongs to the glutamate-gated ion channel (TC 1.A.10.1) family. In terms of assembly, may form heteromers. Expressed predominantly in roots. Firt detected in the vascular tissues of the cotyledons, and later in the vasculature of all organs. In leaves, preferentially expressed in guard cells.

It localises to the membrane. In terms of biological role, glutamate-gated receptor that probably acts as a non-selective cation channel. May be involved in light-signal transduction and calcium homeostasis via the regulation of calcium influx into cells. Required for the long-term calcium oscillation-regulated stomatal movements. This chain is Glutamate receptor 3.1 (GLR3.1), found in Arabidopsis thaliana (Mouse-ear cress).